Reading from the N-terminus, the 423-residue chain is Protein IQ-DOMAIN 16 (423 aa).

2 IQ domains span residues 99–127 and 128–150; these read RHWAAIIIQTAFRGYLSRRALRALKGIVK and LQALVRGNNVRNQAKLTLRCIKA. Positions 231 to 251 form a coiled coil; it reads QKKLEIAIKREKAQALALSNQ. The tract at residues 235–252 is calmodulin-binding; sequence EIAIKREKAQALALSNQI.

The protein belongs to the IQD family. Binds to multiple calmodulin (CaM) in the presence of Ca(2+) and CaM-like proteins.

It localises to the cytoplasm. Its subcellular location is the cytoskeleton. The protein localises to the cell membrane. In terms of biological role, may be involved in cooperative interactions with calmodulins or calmodulin-like proteins. Recruits calmodulin proteins to microtubules, thus being a potential scaffold in cellular signaling and trafficking. Regulates cell shape and elongation in aerial organs (i.e. cotyledons, leaves, and hypocotyls) probably by regulating cortical microtubules (MT) arrays orientation. May associate with nucleic acids and regulate gene expression at the transcriptional or post-transcriptional level. The chain is Protein IQ-DOMAIN 16 from Arabidopsis thaliana (Mouse-ear cress).